We begin with the raw amino-acid sequence, 333 residues long: Transaldolase (333 aa).

Lysine 135 functions as the Schiff-base intermediate with substrate in the catalytic mechanism.

It belongs to the transaldolase family. Type 1 subfamily. Homodimer.

The protein resides in the cytoplasm. It catalyses the reaction D-sedoheptulose 7-phosphate + D-glyceraldehyde 3-phosphate = D-erythrose 4-phosphate + beta-D-fructose 6-phosphate. It participates in carbohydrate degradation; pentose phosphate pathway; D-glyceraldehyde 3-phosphate and beta-D-fructose 6-phosphate from D-ribose 5-phosphate and D-xylulose 5-phosphate (non-oxidative stage): step 2/3. Transaldolase is important for the balance of metabolites in the pentose-phosphate pathway. This is Transaldolase from Prochlorococcus marinus subsp. pastoris (strain CCMP1986 / NIES-2087 / MED4).